Reading from the N-terminus, the 365-residue chain is Large ribosomal subunit protein uL3 (365 aa).

The interval 343 to 365 is disordered; sequence RPPKKKPPVQRPQITYVSVESKQ. Residues 354-365 are compositionally biased toward polar residues; sequence PQITYVSVESKQ.

It belongs to the universal ribosomal protein uL3 family. Part of the 50S ribosomal subunit. Forms a cluster with proteins L14 and L24e.

Its function is as follows. One of the primary rRNA binding proteins, it binds directly near the 3'-end of the 23S rRNA, where it nucleates assembly of the 50S subunit. The polypeptide is Large ribosomal subunit protein uL3 (Pyrococcus furiosus (strain ATCC 43587 / DSM 3638 / JCM 8422 / Vc1)).